A 25-amino-acid polypeptide reads, in one-letter code: Spinigerin (25 aa).

The protein resides in the secreted. In terms of biological role, active against Gram-positive bacteria B.megaterium and M.luteus, Gram-negative bacteria E.coli SBS363 and D22, K.pneumoniae, S.typhimurium and P.aeruginosa, yeast C.albicans and filamentous fungi F.culmorum, N.crassa, N.hematococca and T.viridae. Inactive against Gram-positive bacteria B.subtilis, S.pyogenes, B.thuringiensis and S.aureus, Gram-negative bacteria E.cloacae and E.carotovora and filamentous fungus B.bassiana. The sequence is that of Spinigerin from Pseudacanthotermes spiniger.